The following is a 148-amino-acid chain: EKC/KEOPS complex subunit Lage3 (148 aa).

The tract at residues 1–21 (MQTAHTGLSHTADGADGQTSR) is disordered.

This sequence belongs to the CTAG/PCC1 family. Component of the EKC/KEOPS complex composed of at least GON7, TP53RK, TPRKB, OSGEP and LAGE3; the whole complex dimerizes.

It is found in the cytoplasm. The protein localises to the nucleus. Component of the EKC/KEOPS complex that is required for the formation of a threonylcarbamoyl group on adenosine at position 37 (t(6)A37) in tRNAs that read codons beginning with adenine. The complex is probably involved in the transfer of the threonylcarbamoyl moiety of threonylcarbamoyl-AMP (TC-AMP) to the N6 group of A37. LAGE3 functions as a dimerization module for the complex. The polypeptide is EKC/KEOPS complex subunit Lage3 (Mus musculus (Mouse)).